A 276-amino-acid polypeptide reads, in one-letter code: MSWWQVIVLAAAQGLTEFLPVSSSGHLAIVSRIFFSGDAGASFTAVSQLGTEAAVVIYFARDIVRILSAWLHGLVVKAHRNTDYRLGWYVIIGTIPICILGLFFKDDIRSGVRNLWVVVTALVVFSGVIALAEYVGRQSRHIERLTWRDAVVVGIAQTLALVPGVSRSGSTISAGLFLGLDRELAARFGFLLAIPAVFASGLFSLPDAFHPVTEGMSATGPQLLVATLIAFVLGLTAVAWLLRFLVRHNMYWFVGYRVLVGTGMLVLLATGTVAAT.

Helical transmembrane passes span 84 to 104 (YRLG…GLFF), 115 to 135 (LWVV…AEYV), 188 to 208 (FGFL…LPDA), 222 to 242 (QLLV…AWLL), and 250 to 270 (MYWF…LLAT).

Belongs to the UppP family.

It localises to the cell membrane. It carries out the reaction di-trans,octa-cis-undecaprenyl diphosphate + H2O = di-trans,octa-cis-undecaprenyl phosphate + phosphate + H(+). Functionally, catalyzes the dephosphorylation of undecaprenyl diphosphate (UPP). Confers resistance to bacitracin. The protein is Undecaprenyl-diphosphatase of Mycobacterium tuberculosis (strain ATCC 25177 / H37Ra).